The following is a 92-amino-acid chain: Large ribosomal subunit protein eL43 (92 aa).

Residues 39 to 60 (CQFCGKDAMKRQAVGIWGCKSC) form a C4-type zinc finger.

It belongs to the eukaryotic ribosomal protein eL43 family.

This is Large ribosomal subunit protein eL43 (RPL37A) from Cryptochiton stelleri (Giant gumboot chiton).